The primary structure comprises 37 residues: Kunitz-type proteinase inhibitor AEPI-IV (37 aa).

A BPTI/Kunitz inhibitor domain is found at 6–37; it reads CQLPAVVGRCRGRFPRYYYNTEAGKCQRFIYG.

It belongs to the venom Kunitz-type family. Sea anemone type 2 potassium channel toxin subfamily.

Its subcellular location is the secreted. It localises to the nematocyst. In terms of biological role, dual-function toxin that inhibits both the serine protease trypsin and voltage-gated potassium channels (Kv). The protein is Kunitz-type proteinase inhibitor AEPI-IV of Actinia equina (Beadlet anemone).